The primary structure comprises 212 residues: Neuroendocrine protein 7B2 (212 aa).

A signal peptide spans 1–26 (MVSRMVSTMLSGLLFWLASGWTPAFA). Cysteine 120 and cysteine 130 are oxidised to a cystine. Phosphoserine is present on residues serine 141 and serine 205. The disordered stretch occupies residues 174 to 212 (GGERRKRRSVNPYLQGQRLDNVVAKKSVPHFSDEDKDPE).

Belongs to the 7B2 family. In terms of assembly, interacts with PCSK2/PC2 early in the secretory pathway. Dissociation occurs at later stages. In terms of processing, proteolytically cleaved in the Golgi by a furin-like convertase to generate bioactive peptides. Post-translationally, sulfated on tyrosine residues.

The protein resides in the secreted. Acts as a molecular chaperone for PCSK2/PC2, preventing its premature activation in the regulated secretory pathway. Binds to inactive PCSK2 in the endoplasmic reticulum and facilitates its transport from there to later compartments of the secretory pathway where it is proteolytically matured and activated. Also required for cleavage of PCSK2 but does not appear to be involved in its folding. Plays a role in regulating pituitary hormone secretion. The C-terminal peptide inhibits PCSK2 in vitro. In Homo sapiens (Human), this protein is Neuroendocrine protein 7B2 (SCG5).